A 652-amino-acid chain; its full sequence is Acetyl-coenzyme A synthetase (652 aa).

Residues 189–192 (RGGK) and Ser-311 each bind CoA. ATP contacts are provided by residues 387 to 389 (GEP), 411 to 416 (DTWWQT), Asp-500, and Arg-515. Position 523 (Ser-523) interacts with CoA. Arg-526 contributes to the ATP binding site. Residues Val-537, His-539, and Ile-542 each coordinate Mg(2+). Lys-584 lines the CoA pocket. Residue Lys-609 is modified to N6-acetyllysine.

This sequence belongs to the ATP-dependent AMP-binding enzyme family. Mg(2+) is required as a cofactor. In terms of processing, acetylated. Deacetylation by the SIR2-homolog deacetylase activates the enzyme.

It catalyses the reaction acetate + ATP + CoA = acetyl-CoA + AMP + diphosphate. In terms of biological role, catalyzes the conversion of acetate into acetyl-CoA (AcCoA), an essential intermediate at the junction of anabolic and catabolic pathways. AcsA undergoes a two-step reaction. In the first half reaction, AcsA combines acetate with ATP to form acetyl-adenylate (AcAMP) intermediate. In the second half reaction, it can then transfer the acetyl group from AcAMP to the sulfhydryl group of CoA, forming the product AcCoA. The polypeptide is Acetyl-coenzyme A synthetase (Bartonella quintana (strain Toulouse) (Rochalimaea quintana)).